The sequence spans 407 residues: MQTQLTEEMRQNARALEADSILRACVHCGFCTATCPTYQLLGDELDGPRGRIYLIKQVLEGNEVTLKTQEHLDRCLTCRNCETTCPSGVRYHNLLDIGRDIVEQKVKRPLPERILREGLRQVVPRPAVFRALTQVGLVLRPFLPEQVRAKLPAETVKAKPRPPLRHKRRVLMLEGCAQPTLSPNTNAATARVLDRLGISVMPANEAGCCGAVDYHLNAQEKGLARARNNIDAWWPAIEAGAEAILQTASGCGAFVKEYGQMLKNDALYADKARQVSELAVDLVELLREEPLEKLAIRGDKKLAFHCPCTLQHAQKLNGEVEKVLLRLGFTLTDVPDSHLCCGSAGTYALTHPDLARQLRDNKMNALESGKPEMIVTANIGCQTHLASAGRTSVRHWIEIVEQALEKE.

2 4Fe-4S ferredoxin-type domains span residues 14 to 47 (RALEADSILRACVHCGFCTATCPTYQLLGDELDG) and 66 to 95 (LKTQEHLDRCLTCRNCETTCPSGVRYHNLL). 8 residues coordinate [4Fe-4S] cluster: C25, C28, C31, C35, C75, C78, C81, and C85.

The glycolate oxidase likely consists of three subunits, GlcD, GlcE and GlcF. [4Fe-4S] cluster serves as cofactor.

It localises to the cell inner membrane. It carries out the reaction glycolate + A = glyoxylate + AH2. It catalyses the reaction (R)-lactate + A = pyruvate + AH2. With respect to regulation, in vitro the glycolate oxidase activity is inhibited by the sulfhydryl inhibitors CuSO4 and PCMB, by KCN, but not by the metal complexing agent EDTA. Component of a complex that catalyzes the oxidation of glycolate to glyoxylate. Is required for E.coli to grow on glycolate as a sole source of carbon. Is also able to oxidize D-lactate ((R)-lactate) with a similar rate. Does not link directly to O(2), and 2,6-dichloroindophenol (DCIP) and phenazine methosulfate (PMS) can act as artificial electron acceptors in vitro, but the physiological molecule that functions as a primary electron acceptor during glycolate oxidation is unknown. The protein is Glycolate oxidase iron-sulfur subunit of Escherichia coli (strain K12).